Here is a 130-residue protein sequence, read N- to C-terminus: Large ribosomal subunit protein uL22 (130 aa).

This sequence belongs to the universal ribosomal protein uL22 family. In terms of assembly, part of the 50S ribosomal subunit.

In terms of biological role, this protein binds specifically to 23S rRNA; its binding is stimulated by other ribosomal proteins, e.g. L4, L17, and L20. It is important during the early stages of 50S assembly. It makes multiple contacts with different domains of the 23S rRNA in the assembled 50S subunit and ribosome. Its function is as follows. The globular domain of the protein is located near the polypeptide exit tunnel on the outside of the subunit, while an extended beta-hairpin is found that lines the wall of the exit tunnel in the center of the 70S ribosome. This chain is Large ribosomal subunit protein uL22, found in Clavibacter michiganensis subsp. michiganensis (strain NCPPB 382).